The sequence spans 304 residues: Tyrosine recombinase XerD (304 aa).

The region spanning 1–92 (MKARVLAKTW…VARGLHKFAL (92 aa)) is the Core-binding (CB) domain. The 186-residue stretch at 113–298 (HLPDTLSINE…TADSLREVWR (186 aa)) folds into the Tyr recombinase domain. Catalysis depends on residues Arg156, Lys180, His250, Arg253, and His276. The active-site O-(3'-phospho-DNA)-tyrosine intermediate is the Tyr285.

This sequence belongs to the 'phage' integrase family. XerD subfamily. In terms of assembly, forms a cyclic heterotetrameric complex composed of two molecules of XerC and two molecules of XerD.

The protein resides in the cytoplasm. In terms of biological role, site-specific tyrosine recombinase, which acts by catalyzing the cutting and rejoining of the recombining DNA molecules. The XerC-XerD complex is essential to convert dimers of the bacterial chromosome into monomers to permit their segregation at cell division. It also contributes to the segregational stability of plasmids. This is Tyrosine recombinase XerD from Corynebacterium glutamicum (strain ATCC 13032 / DSM 20300 / JCM 1318 / BCRC 11384 / CCUG 27702 / LMG 3730 / NBRC 12168 / NCIMB 10025 / NRRL B-2784 / 534).